A 236-amino-acid polypeptide reads, in one-letter code: MFDSLVDFLKTNIDQLNGHEVQISSEFKEHHNEDSKYIIKNWLFSSPEYRKWRITRLDGGKKLQVFNTVAYPNFESELPILGADILWFGTSQKLLAILDYQPLIQESKYLEKYCSSLGIIKEEYSAFDNNKMKNIYDSKKYFSPWVIICRGNKLNLDRDLNDIFHSFVNNYLNIYKSNPVNQFLNSEEIKINQIKYDKYSFEKDPADKLFKSFFGEKWTKKFINKFLFTLNNEIIH.

This sequence belongs to the HY2 family.

The enzyme catalyses 15,16-dihydrobiliverdin + oxidized 2[4Fe-4S]-[ferredoxin] = biliverdin IXalpha + reduced 2[4Fe-4S]-[ferredoxin] + 2 H(+). Its function is as follows. Catalyzes the two-electron reduction of biliverdin IX-alpha at the C15 methine bridge. The polypeptide is 15,16-dihydrobiliverdin:ferredoxin oxidoreductase (Prochlorococcus marinus (strain AS9601)).